Consider the following 583-residue polypeptide: Radixin (583 aa).

Positions 5–295 (INVRVTTMDA…GNHELYMRRR (291 aa)) constitute an FERM domain. A 1,2-diacyl-sn-glycero-3-phospho-(1D-myo-inositol) is bound at residue 60–63 (KLNK). Lysine 83 carries the N6-succinyllysine modification. An a 1,2-diacyl-sn-glycero-3-phospho-(1D-myo-inositol)-binding site is contributed by lysine 278. Disordered stretches follow at residues 310–330 (REEK…KKKR), 376–407 (DQER…AKQA), and 462–526 (ELKT…RVKK). Residues 376–400 (DQERKRAKEEAERLEKERRAAEEAK) show a composition bias toward basic and acidic residues. Residues 469–480 (APPPPPPPPVIP) are compositionally biased toward pro residues. Composition is skewed to basic and acidic residues over residues 483-492 (ENEHDEHDEN) and 506-525 (MNHR…ERVK). The residue at position 564 (threonine 564) is a Phosphothreonine; by ROCK2.

As to quaternary structure, binds NHERF1. Interacts with NHERF1, NHERF2, LAYN, MME/NEP and ICAM2. Interacts with CPNE1 (via VWFA domain) and CPNE4 (via VWFA domain). Interacts (via FERM domain) with SPN/CD43 cytoplasmic tail. Interacts with CD44. Interacts with CLIC5; may work together in a complex which also includes EZR and MYO6 to stabilize linkages between the plasma membrane and subjacent actin cytoskeleton at the base of stereocilia. Phosphorylated by tyrosine-protein kinases. Phosphorylation by ROCK2 suppresses the head-to-tail association of the N-terminal and C-terminal halves resulting in an opened conformation which is capable of actin and membrane-binding.

Its subcellular location is the cell membrane. It is found in the cytoplasm. The protein resides in the cytoskeleton. The protein localises to the cleavage furrow. It localises to the cell projection. Its subcellular location is the microvillus. It is found in the stereocilium. Its activity is regulated as follows. A head-to-tail association, of the N-terminal and C-terminal halves results in a closed conformation (inactive form) which is incapable of actin or membrane-binding. In terms of biological role, probably plays a crucial role in the binding of the barbed end of actin filaments to the plasma membrane. This is Radixin (RDX) from Homo sapiens (Human).